The following is a 533-amino-acid chain: WD repeat-containing protein PAC11 (533 aa).

A compositionally biased stretch (basic and acidic residues) spans 1–19 (MERLKQLEEKRRQLKELRE). The disordered stretch occupies residues 1–36 (MERLKQLEEKRRQLKELRERRKQASLFPGSETMGHH). WD repeat units lie at residues 380–422 (FDEV…YLSL) and 432–475 (NHST…AIIG).

Interacts with NUM1, when DYN1 is present.

It localises to the cytoplasm. The protein localises to the cytoskeleton. Required for viability in the absence of the kinesin-related CIN8 mitotic motor. May be a dynein intermediate chain. The sequence is that of WD repeat-containing protein PAC11 (PAC11) from Saccharomyces cerevisiae (strain ATCC 204508 / S288c) (Baker's yeast).